A 196-amino-acid chain; its full sequence is Ribonuclease HII (196 aa).

The region spanning 15 to 196 (FILAGIDEAG…RLSFTKALYK (182 aa)) is the RNase H type-2 domain. Positions 21, 22, and 112 each coordinate a divalent metal cation.

Belongs to the RNase HII family. The cofactor is Mn(2+). Mg(2+) serves as cofactor.

The protein localises to the cytoplasm. It catalyses the reaction Endonucleolytic cleavage to 5'-phosphomonoester.. In terms of biological role, endonuclease that specifically degrades the RNA of RNA-DNA hybrids. The chain is Ribonuclease HII from Rickettsia bellii (strain OSU 85-389).